The chain runs to 965 residues: MTEHESLGLEQNQDGGDTYRHHNLSDGCISSVEDANEQPSSYEEESDDDMQYYERAIQEISSGDSYVCMICTVEMDYTCQMFACKRCYRVFDYGCIREWALKSTEKTVDRIWKCPNCYYVSKRVPVKNRPTCWCGKVVNPDPNPLDPNSCGQTCNASTCMHGCSKICHLGPHPECTRMVEIMCHCGKHSKSIFCYQSKVMKKNFNCQEVCGLPLSCSIHTCKKKCHPGLCGPCPEMIISKDSPKKQIKCYCGNHTRANIKCSETKFPKSGKSSKDENGNRWIGVFACADNRVVDYSCRKHSFIESCISPPTINGEKACPFLPSSLKTCPCGRTALEELTKPRKHCDDPIPTCDSRCGKPLKCGKHSCPFTCHDKACMEPCLQIDSVKCACEQSTFSVPCGFQGRPRCNIKCESLMSCRRHRCTDRCCSGRPSAIRRKKNLFRTQDLLDESLVEAKHICLKPCNLTLSCGIHKCQRKCHPGKCPPCLESDSNDLVCPCGNTVVPAPVRCGTKLPTCNHPCIKVVRGESTCGHKPMPHTCHSLDVSCPPCTETVFKPCKCGKKTKVRTVCFQTDVSCGIKCGIPLSYCYHTCQKTCHLPGNCQKVCKQTCGQKRLNCNHECPKPCHGKTECPDLPCATLVKIYCKCGRIKKSVTCGAKSDRVSVTESSVLDCNEECEALKRLKELKEAFGIKEETNNFTSNELDALKKLVSVATTFEELQLPFTEAALSVYSKQERWCSQIEAILNKLMDDKTRSSLHFKPMRPPQRHFIRELAKAYGLYSESQDREPMRSVFIKKEDNGASNKPVLSLAEAYPLYESFKQLQKERKAQEFQARTTAKLINFEVQDTEPKVEVAKKNGFLVQNLVAGNTAEDLRRFFEPHLKHTLVVNPQYLILDDGKTALVYPENYETASVNTERDMELLVGHFDFMAKEAFLADSISLCSTEEELERRLDTPVIQEDSPVMDNNT.

The RING-type; degenerate zinc-finger motif lies at 68–118 (CMICTVEMDYTCQMFACKRCYRVFDYGCIREWALKSTEKTVDRIWKCPNCY). NF-X1-type zinc fingers lie at residues 159 to 177 (CMHG…ECTR), 216 to 235 (CSIH…PCPE), 362 to 382 (CGKH…PCLQ), 468 to 487 (CGIH…PCLE), and 586 to 606 (CYHT…VCKQ). The R3H domain occupies 733 to 796 (ERWCSQIEAI…MRSVFIKKED (64 aa)). T951 carries the post-translational modification Phosphothreonine. The residue at position 958 (S958) is a Phosphoserine.

It belongs to the NFX1 family. In terms of assembly, interacts with FPR1.

Its subcellular location is the cytoplasm. The protein resides in the nucleus. In terms of biological role, may play a role in transcription regulation. This is FKBP12-associated protein 1 (FAP1) from Saccharomyces cerevisiae (strain ATCC 204508 / S288c) (Baker's yeast).